Here is a 530-residue protein sequence, read N- to C-terminus: C2H2-type transcription factor MSN2 (530 aa).

2 C2H2-type zinc fingers span residues 409–437 (FVCD…QEKP) and 438–465 (FECN…SGGA).

It localises to the nucleus. The protein resides in the cytoplasm. Transcription factor that acts as a key downstream transcription factor in the HOG1-MAPK pathway. Plays crucial roles in the regulation of dimorphism transition, aggravated pigmentation, conidiation, microsclerotia formation and subsequent virulence towards Spodoptera litura larvae. More specifically regulates the expression of genes involved in antioxidation, pigment biosynthesis and ion transport and storage. This Metarhizium rileyi (strain RCEF 4871) (Nomuraea rileyi) protein is C2H2-type transcription factor MSN2.